The chain runs to 398 residues: Cysteine protease ATG4A (398 aa).

Catalysis depends on cysteine 77, which acts as the Nucleophile. Residues aspartate 279 and histidine 281 contribute to the active site. Residues 393 to 396 (FEIL) carry the LIR motif.

The protein belongs to the peptidase C54 family. As to quaternary structure, interacts with ATG9A; the interaction is direct.

It localises to the cytoplasm. The enzyme catalyses [protein]-C-terminal L-amino acid-glycyl-phosphatidylethanolamide + H2O = [protein]-C-terminal L-amino acid-glycine + a 1,2-diacyl-sn-glycero-3-phosphoethanolamine. Inhibited by N-ethylmaleimide. Redox-regulated during autophagy since reducing conditions activate ATG4A whereas an oxidizing environment such as the presence of H(2)O(2) inhibits its activity. Cysteine protease that plays a key role in autophagy by mediating both proteolytic activation and delipidation of ATG8 family proteins. The protease activity is required for proteolytic activation of ATG8 family proteins: cleaves the C-terminal amino acid of ATG8 proteins to reveal a C-terminal glycine. Exposure of the glycine at the C-terminus is essential for ATG8 proteins conjugation to phosphatidylethanolamine (PE) and insertion to membranes, which is necessary for autophagy. Preferred substrate is GABARAPL2 followed by MAP1LC3A and GABARAP. Protease activity is also required to counteract formation of high-molecular weight conjugates of ATG8 proteins (ATG8ylation): acts as a deubiquitinating-like enzyme that removes ATG8 conjugated to other proteins, such as ATG3. In addition to the protease activity, also mediates delipidation of ATG8 family proteins. Catalyzes delipidation of PE-conjugated forms of ATG8 proteins during macroautophagy. Compared to ATG4B, the major protein for proteolytic activation of ATG8 proteins, shows weaker ability to cleave the C-terminal amino acid of ATG8 proteins, while it displays stronger delipidation activity. Involved in phagophore growth during mitophagy independently of its protease activity and of ATG8 proteins: acts by regulating ATG9A trafficking to mitochondria and promoting phagophore-endoplasmic reticulum contacts during the lipid transfer phase of mitophagy. Functionally, (Microbial infection) Mediates cleavage of an ATG8 protein homolog coded in the genome of cytopathogenic bovine viral diarrhea virus (BVDV). In Bos taurus (Bovine), this protein is Cysteine protease ATG4A.